The chain runs to 292 residues: Glycine--tRNA ligase alpha subunit (292 aa).

The protein belongs to the class-II aminoacyl-tRNA synthetase family. Tetramer of two alpha and two beta subunits.

The protein localises to the cytoplasm. It catalyses the reaction tRNA(Gly) + glycine + ATP = glycyl-tRNA(Gly) + AMP + diphosphate. This chain is Glycine--tRNA ligase alpha subunit, found in Pelobacter propionicus (strain DSM 2379 / NBRC 103807 / OttBd1).